A 138-amino-acid chain; its full sequence is Large ribosomal subunit protein bL17 (138 aa).

This sequence belongs to the bacterial ribosomal protein bL17 family. Part of the 50S ribosomal subunit. Contacts protein L32.

The sequence is that of Large ribosomal subunit protein bL17 from Bradyrhizobium diazoefficiens (strain JCM 10833 / BCRC 13528 / IAM 13628 / NBRC 14792 / USDA 110).